Consider the following 379-residue polypeptide: Junctional adhesion molecule-like (379 aa).

A signal peptide spans 1–20; the sequence is MLCLLKLIVIPVILAPVGYP. The Extracellular portion of the chain corresponds to 21-281; the sequence is QGLPGLTVSS…QQGILNGNQL (261 aa). Ig-like V-type domains lie at 24-135 and 140-250; these read PGLT…KPVE and PEEP…KTIV. Cysteines 45 and 119 form a disulfide. N-linked (GlcNAc...) asparagine glycosylation is found at Asn-79, Asn-89, and Asn-125. An intrachain disulfide couples Cys-158 to Cys-236. Residues 282-302 form a helical membrane-spanning segment; the sequence is VIIVGIVCATFLLLPVLILIV. Residues 303–379 are Cytoplasmic-facing; it reads KKAKWNKSSV…SLVRSSVRSK (77 aa). Phosphotyrosine is present on Tyr-355.

It belongs to the immunoglobulin superfamily. As to quaternary structure, homodimer; active form in leukocyte-endothelial cell adhesion. Interacts (homodimeric form) with CXADR. Interacts (via cytoplasmic domain) with the PI3 kinase; upon CXADR-binding. Interacts with ITGA4 and ITGB1; integrin alpha-4/beta-1 may regulate leukocyte to endothelial cells adhesion by controlling JAML homodimerization. In terms of tissue distribution, expressed by gamma-delta intraepithelial T cells (at protein level).

The protein localises to the cell membrane. Its subcellular location is the cell junction. In terms of biological role, transmembrane protein of the plasma membrane of leukocytes that control their migration and activation through interaction with CXADR, a plasma membrane receptor found on adjacent epithelial and endothelial cells. The interaction between both receptors mediates the activation of gamma-delta T-cells, a subpopulation of T-cells residing in epithelia and involved in tissue homeostasis and repair. Upon epithelial CXADR-binding, JAML induces downstream cell signaling events in gamma-delta T-cells through PI3-kinase and MAP kinases. It results in proliferation and production of cytokines and growth factors by T-cells that in turn stimulate epithelial tissues repair. It also controls the transmigration of leukocytes within epithelial and endothelial tissues through adhesive interactions with epithelial and endothelial CXADR. The protein is Junctional adhesion molecule-like of Mus musculus (Mouse).